The primary structure comprises 135 residues: Large ribosomal subunit protein eL27y (135 aa).

Belongs to the eukaryotic ribosomal protein eL27 family.

The protein is Large ribosomal subunit protein eL27y (RPL27B) of Arabidopsis thaliana (Mouse-ear cress).